The sequence spans 189 residues: UPF0301 protein PFL_5830 (189 aa).

Belongs to the UPF0301 (AlgH) family.

This is UPF0301 protein PFL_5830 from Pseudomonas fluorescens (strain ATCC BAA-477 / NRRL B-23932 / Pf-5).